Here is a 153-residue protein sequence, read N- to C-terminus: NADPH-dependent 7-cyano-7-deazaguanine reductase (153 aa).

The Thioimide intermediate role is filled by Cys51. Catalysis depends on Asp58, which acts as the Proton donor. Substrate-binding positions include Leu73–Ser75 and His92–Glu93.

This sequence belongs to the GTP cyclohydrolase I family. QueF type 1 subfamily.

The protein localises to the cytoplasm. The catalysed reaction is 7-aminomethyl-7-carbaguanine + 2 NADP(+) = 7-cyano-7-deazaguanine + 2 NADPH + 3 H(+). It functions in the pathway tRNA modification; tRNA-queuosine biosynthesis. Functionally, catalyzes the NADPH-dependent reduction of 7-cyano-7-deazaguanine (preQ0) to 7-aminomethyl-7-deazaguanine (preQ1). In Bradyrhizobium diazoefficiens (strain JCM 10833 / BCRC 13528 / IAM 13628 / NBRC 14792 / USDA 110), this protein is NADPH-dependent 7-cyano-7-deazaguanine reductase.